The chain runs to 396 residues: D-alanine--D-alanine ligase (396 aa).

The 207-residue stretch at 141–347 folds into the ATP-grasp domain; it reads KMLWQAAGLP…PQDLMAQLLS (207 aa). An ATP-binding site is contributed by 174–229; sequence ETRLGYPLFVKPAQAGSSVGASAVQTRAPLIPAIEAAFQWDEVVLVERYVRAREIE. Positions 301, 314, and 316 each coordinate Mg(2+). A disordered region spans residues 374-396; it reads AAHDPDAQGDDWDQRDSNPLPTA.

It belongs to the D-alanine--D-alanine ligase family. Mg(2+) is required as a cofactor. The cofactor is Mn(2+).

It localises to the cytoplasm. The catalysed reaction is 2 D-alanine + ATP = D-alanyl-D-alanine + ADP + phosphate + H(+). Its pathway is cell wall biogenesis; peptidoglycan biosynthesis. Functionally, cell wall formation. The polypeptide is D-alanine--D-alanine ligase (Treponema pallidum (strain Nichols)).